A 208-amino-acid polypeptide reads, in one-letter code: ATP-dependent Clp protease proteolytic subunit (208 aa).

Ser-105 serves as the catalytic Nucleophile. His-130 is a catalytic residue.

Belongs to the peptidase S14 family. As to quaternary structure, fourteen ClpP subunits assemble into 2 heptameric rings which stack back to back to give a disk-like structure with a central cavity, resembling the structure of eukaryotic proteasomes.

It is found in the cytoplasm. It catalyses the reaction Hydrolysis of proteins to small peptides in the presence of ATP and magnesium. alpha-casein is the usual test substrate. In the absence of ATP, only oligopeptides shorter than five residues are hydrolyzed (such as succinyl-Leu-Tyr-|-NHMec, and Leu-Tyr-Leu-|-Tyr-Trp, in which cleavage of the -Tyr-|-Leu- and -Tyr-|-Trp bonds also occurs).. Cleaves peptides in various proteins in a process that requires ATP hydrolysis. Has a chymotrypsin-like activity. Plays a major role in the degradation of misfolded proteins. The chain is ATP-dependent Clp protease proteolytic subunit from Xylella fastidiosa (strain M12).